A 336-amino-acid polypeptide reads, in one-letter code: uncharacterized protein (336 aa).

Residues 123–323 (KTLMRDSGVP…YSSLINGILD (201 aa)) form the ATP-grasp domain.

The protein belongs to the D-alanine--D-alanine ligase family.

Could be involved in the biosynthesis of a cell wall component. This is an uncharacterized protein from Sinorhizobium fredii (strain NBRC 101917 / NGR234).